The sequence spans 152 residues: UPF0756 membrane protein EF_1246 (152 aa).

The next 4 helical transmembrane spans lie at 4 to 24 (WLFL…SLLI), 52 to 72 (LGVT…QIGL), 85 to 105 (WLGI…VGLI), and 115 to 135 (LVFG…GPII).

Belongs to the UPF0756 family.

The protein resides in the cell membrane. The chain is UPF0756 membrane protein EF_1246 from Enterococcus faecalis (strain ATCC 700802 / V583).